The primary structure comprises 388 residues: Succinate--CoA ligase [ADP-forming] subunit beta (388 aa).

Positions 9–244 (KDLLVSYDIA…PSQENVRDVL (236 aa)) constitute an ATP-grasp domain. ATP is bound by residues Lys46, 53–55 (GRG), Val102, and Glu107. Asn199 and Asp213 together coordinate Mg(2+). Substrate-binding positions include Asn264 and 321 to 323 (GIM).

Belongs to the succinate/malate CoA ligase beta subunit family. As to quaternary structure, heterotetramer of two alpha and two beta subunits. The cofactor is Mg(2+).

The catalysed reaction is succinate + ATP + CoA = succinyl-CoA + ADP + phosphate. The enzyme catalyses GTP + succinate + CoA = succinyl-CoA + GDP + phosphate. Its pathway is carbohydrate metabolism; tricarboxylic acid cycle; succinate from succinyl-CoA (ligase route): step 1/1. Its function is as follows. Succinyl-CoA synthetase functions in the citric acid cycle (TCA), coupling the hydrolysis of succinyl-CoA to the synthesis of either ATP or GTP and thus represents the only step of substrate-level phosphorylation in the TCA. The beta subunit provides nucleotide specificity of the enzyme and binds the substrate succinate, while the binding sites for coenzyme A and phosphate are found in the alpha subunit. This Chlamydia caviae (strain ATCC VR-813 / DSM 19441 / 03DC25 / GPIC) (Chlamydophila caviae) protein is Succinate--CoA ligase [ADP-forming] subunit beta.